Here is a 372-residue protein sequence, read N- to C-terminus: N-methyl-L-tryptophan oxidase (372 aa).

Position 4–34 (4–34) interacts with FAD; it reads DLIIIGSGSVGAAAGYYATRAGLNVLMTDAH. At C308 the chain carries S-8alpha-FAD cysteine.

It belongs to the MSOX/MTOX family. MTOX subfamily. As to quaternary structure, monomer. Requires FAD as cofactor.

It catalyses the reaction N(alpha)-methyl-L-tryptophan + O2 + H2O = L-tryptophan + formaldehyde + H2O2. Catalyzes the oxidative demethylation of N-methyl-L-tryptophan. The protein is N-methyl-L-tryptophan oxidase of Escherichia coli O127:H6 (strain E2348/69 / EPEC).